The sequence spans 151 residues: SsrA-binding protein (151 aa).

Belongs to the SmpB family.

Its subcellular location is the cytoplasm. Its function is as follows. Required for rescue of stalled ribosomes mediated by trans-translation. Binds to transfer-messenger RNA (tmRNA), required for stable association of tmRNA with ribosomes. tmRNA and SmpB together mimic tRNA shape, replacing the anticodon stem-loop with SmpB. tmRNA is encoded by the ssrA gene; the 2 termini fold to resemble tRNA(Ala) and it encodes a 'tag peptide', a short internal open reading frame. During trans-translation Ala-aminoacylated tmRNA acts like a tRNA, entering the A-site of stalled ribosomes, displacing the stalled mRNA. The ribosome then switches to translate the ORF on the tmRNA; the nascent peptide is terminated with the 'tag peptide' encoded by the tmRNA and targeted for degradation. The ribosome is freed to recommence translation, which seems to be the essential function of trans-translation. The polypeptide is SsrA-binding protein (Wolinella succinogenes (strain ATCC 29543 / DSM 1740 / CCUG 13145 / JCM 31913 / LMG 7466 / NCTC 11488 / FDC 602W) (Vibrio succinogenes)).